A 122-amino-acid polypeptide reads, in one-letter code: uncharacterized protein (122 aa).

Basic and acidic residues predominate over residues 1 to 15; that stretch reads MAEPGGRGDYHKDGR. The tract at residues 1-26 is disordered; it reads MAEPGGRGDYHKDGRPPSLSRSPLFT.

This is an uncharacterized protein from Macaca fascicularis (Crab-eating macaque).